The chain runs to 155 residues: Transcription antitermination protein NusB (155 aa).

The protein belongs to the NusB family.

Involved in transcription antitermination. Required for transcription of ribosomal RNA (rRNA) genes. Binds specifically to the boxA antiterminator sequence of the ribosomal RNA (rrn) operons. In Azoarcus sp. (strain BH72), this protein is Transcription antitermination protein NusB.